Consider the following 469-residue polypeptide: Lactonohydrolase oryH (469 aa).

A signal peptide spans M1 to A20.

The protein belongs to the SMP-30/CGR1 family.

It functions in the pathway secondary metabolite biosynthesis. Its function is as follows. Lactonohydrolase; part of the gene cluster that mediates the biosynthesis of oryzines, natural products with an unusual maleidride backbone. The two subunits of the fungal fatty acid synthase oryfasA and oryfasB probably form octenoic acid. This fatty acid is most likely activated by the acyl-CoA ligase oryP to give octenyl-CoA before the citrate synthase-like protein oryE catalyzes condensation with oxaloacetate to form tricarboxylic acid. The next steps of the pathways are conjectural, but a favorite possible route has been proposed, beginning with decarboxylation and concomitant dehydration by the decarboxylase oryM, followed by tautomerization, which may lead to the production of a diene intermediate. Reduction of this diene intermediate could give the known metabolite piliformic acid. On the pathway to oryzine B and oryzine A, however, hydroxylation of the diene by the alpha-ketoglutarate-dependent dioxygenase oryG and lactonisation by the lactonohydrolases oryH or oryL could give oryzine B directly. Finally, enoyl reduction by the dehydrogenase oryD would then convert oryzine B into oryzine A. In Aspergillus oryzae (strain ATCC 42149 / RIB 40) (Yellow koji mold), this protein is Lactonohydrolase oryH.